Reading from the N-terminus, the 588-residue chain is MNNSINHKFHHISRAEYQELLAVSRGDAVADYIIDNVSILDLINGGEISGPIVIKGRYIAGVGAEYADAPALQRIDARGATAVPGFIDAHLHIESSMMTPVTFETATLPRGLTTVICDPHEIVNVMGEAGFAWFARCAEQARQNQYLQVSSCVPALEGCDVNGASFTLEQMLAWRDHPQVTGLAEMMDYPGVISGQNALLDKLDAFRHLTLDGHCPGLGGKELNAYIAAGIENCHESYQLEEGRRKLQLGMSLMIREGSAARNLNALAPLINEFNSPQCMLCTDDRNPWEIAHEGHIDALIRRLIEQHNVPLHVAYRVASWSTARHFGLNHLGLLAPGKQADIVLLSDARKVTVQQVLVKGEPIDAQTLQAKESARLAQSAPPYGNTISRQPVSASDFALQFTPGKRYRVIDVIHNELITHSRSSVYSENGFDRDDVCFIAVLERYGQRLAPACGLLGGFGLNEGALAATVSHDSHNIVVIGRSAEEMALAVNQVIQDGGGLCVVRNGQVQSHLPLPIAGLMSTDTAQSLAEQIDALKAAARECGPLPDEPFIQMAFLSLPVIPALKLTSQGLFDGEKFAFTTLEVTE.

This sequence belongs to the metallo-dependent hydrolases superfamily. Adenine deaminase family. In terms of assembly, homodimer. The cofactor is Mn(2+).

It catalyses the reaction adenine + H2O + H(+) = hypoxanthine + NH4(+). In Escherichia coli O7:K1 (strain IAI39 / ExPEC), this protein is Adenine deaminase.